We begin with the raw amino-acid sequence, 321 residues long: Phospho-N-acetylmuramoyl-pentapeptide-transferase (321 aa).

Helical transmembrane passes span Met1–Ile21, Met50–Val70, Ile76–Ile96, Phe112–Val132, Ile140–Trp160, Gly176–Leu196, Ala200–Leu220, Val225–Met245, Leu250–Val270, and Val300–Val320.

The protein belongs to the glycosyltransferase 4 family. MraY subfamily. Mg(2+) is required as a cofactor.

Its subcellular location is the cell membrane. The enzyme catalyses UDP-N-acetyl-alpha-D-muramoyl-L-alanyl-gamma-D-glutamyl-L-lysyl-D-alanyl-D-alanine + di-trans,octa-cis-undecaprenyl phosphate = Mur2Ac(oyl-L-Ala-gamma-D-Glu-L-Lys-D-Ala-D-Ala)-di-trans,octa-cis-undecaprenyl diphosphate + UMP. Its pathway is cell wall biogenesis; peptidoglycan biosynthesis. Functionally, catalyzes the initial step of the lipid cycle reactions in the biosynthesis of the cell wall peptidoglycan: transfers peptidoglycan precursor phospho-MurNAc-pentapeptide from UDP-MurNAc-pentapeptide onto the lipid carrier undecaprenyl phosphate, yielding undecaprenyl-pyrophosphoryl-MurNAc-pentapeptide, known as lipid I. The polypeptide is Phospho-N-acetylmuramoyl-pentapeptide-transferase (Staphylococcus epidermidis (strain ATCC 12228 / FDA PCI 1200)).